The following is a 128-amino-acid chain: Calcitonin gene-related peptide 1 (128 aa).

The N-terminal stretch at 1 to 25 is a signal peptide; that stretch reads MGLWKSSPFLAFSILVLCQAGGLQA. Positions 26 to 80 are excised as a propeptide; that stretch reads APFRSALEGLPDPTALSEKEGRLLLAALVKAYVQRKNELEQEQEQETEGSSITAQ. The interval 63-83 is disordered; the sequence is ELEQEQEQETEGSSITAQKRS. Polar residues predominate over residues 74–83; that stretch reads GSSITAQKRS. C84 and C89 are joined by a disulfide. Phenylalanine amide is present on F119. A propeptide spanning residues 125 to 128 is cleaved from the precursor; it reads DLRA.

This sequence belongs to the calcitonin family.

It is found in the secreted. CGRP1/CALCA is a peptide hormone that induces vasodilation mediated by the CALCRL-RAMP1 receptor complex. Dilates a variety of vessels including the coronary, cerebral and systemic vasculature. Its abundance in the CNS also points toward a neurotransmitter or neuromodulator role. It also elevates platelet cAMP. CGRP1 can also bind and activate CALCR-RAMP1 (AMYR1) receptor complex. This Canis lupus familiaris (Dog) protein is Calcitonin gene-related peptide 1 (CALCA).